The following is a 478-amino-acid chain: Geranial dehydrogenase (478 aa).

230–235 is an NAD(+) binding site; it reads GSTSAG. Glu252 (proton acceptor) is an active-site residue. Residue Cys286 is the Nucleophile of the active site.

Belongs to the aldehyde dehydrogenase family.

The enzyme catalyses (2E)-geranial + NAD(+) + H2O = geranate + NADH + 2 H(+). The catalysed reaction is perillyl aldehyde + NAD(+) + H2O = perillate + NADH + 2 H(+). It functions in the pathway terpene metabolism; monoterpene degradation. Involved in the degradation of the monoterpenes beta-myrcene and limonene. During anaerobic degradation of beta-myrcene, catalyzes the NAD(+)-dependent oxidation of geranial to geranic acid. Seems to be specific for the trans-isomer geranial, since it does not act on the cis-isomer neral. During degradation of limonene, catalyzes the NAD(+)-dependent conversion of perillyl aldehyde to perrilic acid. This chain is Geranial dehydrogenase, found in Castellaniella defragrans (strain DSM 12143 / CCUG 39792 / 65Phen) (Alcaligenes defragrans).